The chain runs to 664 residues: Macrolide export ATP-binding/permease protein MacB (664 aa).

The ABC transporter domain maps to 8 to 246; it reads LEVHNLVREF…ELNKDPDAAP (239 aa). 44-51 contacts ATP; that stretch reads GQSGSGKS. The next 4 membrane-spanning stretches (helical) occupy residues 287–307, 543–563, 587–607, and 629–649; these read FLTM…VALG, IAVI…LVSV, FLIE…LLSL, and SIVA…FLPA.

It belongs to the ABC transporter superfamily. Macrolide exporter (TC 3.A.1.122) family. As to quaternary structure, homodimer. Part of the tripartite efflux system MacAB-TolC, which is composed of an inner membrane transporter, MacB, a periplasmic membrane fusion protein, MacA, and an outer membrane component, TolC. The complex forms a large protein conduit and can translocate molecules across both the inner and outer membranes. Interacts with MacA.

Its subcellular location is the cell inner membrane. In terms of biological role, part of the tripartite efflux system MacAB-TolC. MacB is a non-canonical ABC transporter that contains transmembrane domains (TMD), which form a pore in the inner membrane, and an ATP-binding domain (NBD), which is responsible for energy generation. Confers resistance against macrolides. This Acinetobacter baylyi (strain ATCC 33305 / BD413 / ADP1) protein is Macrolide export ATP-binding/permease protein MacB.